Reading from the N-terminus, the 156-residue chain is Urease accessory protein UreE (156 aa).

The disordered stretch occupies residues 133 to 156 (RPESGAYGSGRTMGHDHGPFHVHA). Positions 145-156 (MGHDHGPFHVHA) are enriched in basic and acidic residues.

Belongs to the UreE family.

It is found in the cytoplasm. Involved in urease metallocenter assembly. Binds nickel. Probably functions as a nickel donor during metallocenter assembly. The chain is Urease accessory protein UreE from Rhodobacter capsulatus (Rhodopseudomonas capsulata).